The sequence spans 263 residues: Small ribosomal subunit protein uS3 (263 aa).

Residues 39–107 (VREYLKKKLK…PVHVNIEEIR (69 aa)) form the KH type-2 domain. Positions 211–263 (GELPPEAATPREEERRPRRAPRGDRPDGARTGRPGGRGRGPRKADAAPAPEGE) are disordered. Positions 219-240 (TPREEERRPRRAPRGDRPDGAR) are enriched in basic and acidic residues.

This sequence belongs to the universal ribosomal protein uS3 family. Part of the 30S ribosomal subunit. Forms a tight complex with proteins S10 and S14.

Binds the lower part of the 30S subunit head. Binds mRNA in the 70S ribosome, positioning it for translation. This is Small ribosomal subunit protein uS3 from Bordetella pertussis (strain Tohama I / ATCC BAA-589 / NCTC 13251).